The primary structure comprises 458 residues: Probable asparagine--tRNA ligase, cytoplasmic (458 aa).

This sequence belongs to the class-II aminoacyl-tRNA synthetase family.

It localises to the cytoplasm. The enzyme catalyses tRNA(Asn) + L-asparagine + ATP = L-asparaginyl-tRNA(Asn) + AMP + diphosphate + H(+). This chain is Probable asparagine--tRNA ligase, cytoplasmic, found in Enterocytozoon bieneusi (strain H348) (Microsporidian parasite).